Consider the following 658-residue polypeptide: Interferon-induced GTP-binding protein Mx1 (658 aa).

Met1 is subject to N-acetylmethionine. Residues 1–20 are disordered; the sequence is MVNSKGKITDSDPGSSHLLL. A Dynamin-type G domain is found at 65–338; sequence DLALPAIAVI…LITHICKTLP (274 aa). Residues 75–82 form a G1 motif region; sequence GDQSSGKS. A GTP-binding site is contributed by 75–82; it reads GDQSSGKS. The G2 motif stretch occupies residues 100–102; it reads VTR. Residues 176–179 form a G3 motif region; that stretch reads DLPG. GTP-binding positions include 176-180 and 245-248; these read DLPGI and TKPD. The tract at residues 245–248 is G4 motif; it reads TKPD. The G5 motif stretch occupies residues 277 to 280; the sequence is KCRG. Positions 339-364 are bundle signaling element (BSE); it reads LLEKQIKENYEKITEELQKYGSDVPE. A middle domain region spans residues 364-531; it reads EEEHEKMFFL…HFQMEQIVYC (168 aa). The interval 365 to 628 is stalk; sequence EEHEKMFFLI…KDTHNWLLKE (264 aa). The interval 551–554 is critical for lipid-binding; it reads KDKK. Residues 570–658 enclose the GED domain; the sequence is LSDIFEHLLA…ARRRLAKFPG (89 aa).

This sequence belongs to the TRAFAC class dynamin-like GTPase superfamily. Dynamin/Fzo/YdjA family. Homooligomer. Oligomerizes into multimeric filamentous or ring-like structures by virtue of its stalk domain. Oligomerization is critical for GTPase activity, protein stability, and recognition of viral target structures. Interacts with TRPC1, TRPC3, TRPC4, TRPC5, TRPC6 and TRPC7. Interacts with HSPA5. Interacts with TUBB/TUBB5. Interacts with DDX39A and DDX39B. Post-translationally, ISGylated.

The protein resides in the cytoplasm. Its subcellular location is the endoplasmic reticulum membrane. It localises to the perinuclear region. Functionally, interferon-induced dynamin-like GTPase with antiviral activity. This Otaria byronia (South American sea lion) protein is Interferon-induced GTP-binding protein Mx1 (MX1).